The sequence spans 128 residues: Aspartate 1-decarboxylase (128 aa).

The active-site Schiff-base intermediate with substrate; via pyruvic acid is the Ser-25. Ser-25 carries the pyruvic acid (Ser) modification. A substrate-binding site is contributed by Thr-57. Tyr-58 (proton donor) is an active-site residue. 73-75 (GSA) serves as a coordination point for substrate.

This sequence belongs to the PanD family. In terms of assembly, heterooctamer of four alpha and four beta subunits. The cofactor is pyruvate. In terms of processing, is synthesized initially as an inactive proenzyme, which is activated by self-cleavage at a specific serine bond to produce a beta-subunit with a hydroxyl group at its C-terminus and an alpha-subunit with a pyruvoyl group at its N-terminus.

Its subcellular location is the cytoplasm. The catalysed reaction is L-aspartate + H(+) = beta-alanine + CO2. Its pathway is cofactor biosynthesis; (R)-pantothenate biosynthesis; beta-alanine from L-aspartate: step 1/1. Functionally, catalyzes the pyruvoyl-dependent decarboxylation of aspartate to produce beta-alanine. This is Aspartate 1-decarboxylase from Burkholderia cenocepacia (strain ATCC BAA-245 / DSM 16553 / LMG 16656 / NCTC 13227 / J2315 / CF5610) (Burkholderia cepacia (strain J2315)).